The chain runs to 151 residues: uncharacterized protein (151 aa).

A disordered region spans residues 1 to 24 (MHAKTKKLGTDTSYKRPQVTAQEQ).

This is an uncharacterized protein from Acanthamoeba polyphaga mimivirus (APMV).